A 428-amino-acid polypeptide reads, in one-letter code: Gamma-glutamyl phosphate reductase (428 aa).

This sequence belongs to the gamma-glutamyl phosphate reductase family.

The protein resides in the cytoplasm. The enzyme catalyses L-glutamate 5-semialdehyde + phosphate + NADP(+) = L-glutamyl 5-phosphate + NADPH + H(+). The protein operates within amino-acid biosynthesis; L-proline biosynthesis; L-glutamate 5-semialdehyde from L-glutamate: step 2/2. In terms of biological role, catalyzes the NADPH-dependent reduction of L-glutamate 5-phosphate into L-glutamate 5-semialdehyde and phosphate. The product spontaneously undergoes cyclization to form 1-pyrroline-5-carboxylate. In Streptomyces avermitilis (strain ATCC 31267 / DSM 46492 / JCM 5070 / NBRC 14893 / NCIMB 12804 / NRRL 8165 / MA-4680), this protein is Gamma-glutamyl phosphate reductase.